Here is a 125-residue protein sequence, read N- to C-terminus: MARLFGTEIPNEKRIEASLPYIYGIGRSTSKRILEQAGINPDIRTGQLTDEQLTKIVQVITTDGILIEGDLRREKQSILKRLTSINCYRGQRHRRGLPVRGQRTRTNARTRKGKKKTVGAQAKKK.

The tract at residues 92 to 125 is disordered; sequence RHRRGLPVRGQRTRTNARTRKGKKKTVGAQAKKK.

This sequence belongs to the universal ribosomal protein uS13 family. In terms of assembly, part of the 30S ribosomal subunit. Forms a loose heterodimer with protein S19. Forms two bridges to the 50S subunit in the 70S ribosome.

Located at the top of the head of the 30S subunit, it contacts several helices of the 16S rRNA. In the 70S ribosome it contacts the 23S rRNA (bridge B1a) and protein L5 of the 50S subunit (bridge B1b), connecting the 2 subunits; these bridges are implicated in subunit movement. Contacts the tRNAs in the A and P-sites. This is Small ribosomal subunit protein uS13 from Akkermansia muciniphila (strain ATCC BAA-835 / DSM 22959 / JCM 33894 / BCRC 81048 / CCUG 64013 / CIP 107961 / Muc).